Here is a 247-residue protein sequence, read N- to C-terminus: MSVTMREMLEAGCHFGHQTRFWNPKMAPFIFGHRNKIHIINLEKTLPMFQDAMKYVRQLAANRGTILFVGTKRQSREILAEEAGRAGMPYVDARWLGGMLTNFKTVKTSIKRLKDMEAAKEAGALETMSKKEALMFEREMIKLEKSIGGIKEMGGVPDAIFVVDVGYHKIAVTEANKLGIPVIGVVDTNHSPEGIDYVIPGNDDSSKAVALYVRGVADAILEGRANAVQEVVEAARGDDEFVEVQEG.

It belongs to the universal ribosomal protein uS2 family.

This chain is Small ribosomal subunit protein uS2, found in Cupriavidus taiwanensis (strain DSM 17343 / BCRC 17206 / CCUG 44338 / CIP 107171 / LMG 19424 / R1) (Ralstonia taiwanensis (strain LMG 19424)).